The primary structure comprises 245 residues: DNA repair protein RecO (245 aa).

This sequence belongs to the RecO family.

Functionally, involved in DNA repair and RecF pathway recombination. The sequence is that of DNA repair protein RecO from Chromobacterium violaceum (strain ATCC 12472 / DSM 30191 / JCM 1249 / CCUG 213 / NBRC 12614 / NCIMB 9131 / NCTC 9757 / MK).